The following is a 37-amino-acid chain: Large ribosomal subunit protein bL36 (37 aa).

Belongs to the bacterial ribosomal protein bL36 family.

The protein is Large ribosomal subunit protein bL36 of Mycoplasmopsis pulmonis (strain UAB CTIP) (Mycoplasma pulmonis).